The primary structure comprises 183 residues: Adenine phosphoribosyltransferase (183 aa).

This sequence belongs to the purine/pyrimidine phosphoribosyltransferase family. Homodimer.

The protein localises to the cytoplasm. It catalyses the reaction AMP + diphosphate = 5-phospho-alpha-D-ribose 1-diphosphate + adenine. The protein operates within purine metabolism; AMP biosynthesis via salvage pathway; AMP from adenine: step 1/1. Functionally, catalyzes a salvage reaction resulting in the formation of AMP, that is energically less costly than de novo synthesis. The chain is Adenine phosphoribosyltransferase from Sodalis glossinidius (strain morsitans).